The following is a 202-amino-acid chain: CASP-like protein 2B1 (202 aa).

Residues 1–29 (MSYLGVGVSPGNVPVYHGTNLKVVDRRVR) are Cytoplasmic-facing. The helical transmembrane segment at 30–50 (LAELVLRCVICGLGILAAVLV) threads the bilayer. Residues 51–72 (GTDTQVKVIFTIQKKAKFTDMK) are Extracellular-facing. Residues 73–93 (ALVFLVIANGIAAAYSLIQGL) form a helical membrane-spanning segment. The Cytoplasmic portion of the chain corresponds to 94–109 (RCVVSMVRGSVLFSKP). The helical transmembrane segment at 110 to 130 (LAWAIFSGDQVIAYLTLAAVA) threads the bilayer. At 131–164 (AAAQSSVFGEFGQPELQWMKICNMYGKFCNQVGE) the chain is on the extracellular side. A helical membrane pass occupies residues 165–185 (GIVSAVGVSLSMVILSGISAF). Residues 186-202 (SLFRLYGGNKGTSGGRW) are Cytoplasmic-facing.

This sequence belongs to the Casparian strip membrane proteins (CASP) family. As to quaternary structure, homodimer and heterodimers.

It localises to the cell membrane. The chain is CASP-like protein 2B1 from Vitis vinifera (Grape).